The following is a 446-amino-acid chain: Glutamine synthetase (446 aa).

The GS beta-grasp domain maps to 14–107 (NNVKFLRFQF…IICDVYRKNG (94 aa)). The GS catalytic domain occupies 114–446 (PRGCLKRVLA…DWEFNKYVRI (333 aa)). Residues glutamate 138 and glutamate 140 each coordinate Mg(2+). Glutamate 187 lines the ATP pocket. The Mg(2+) site is built by glutamate 192 and glutamate 199. Residues 243-244 (NG) and glycine 244 contribute to the L-glutamate site. Residue histidine 248 participates in Mg(2+) binding. ATP is bound at residue serine 252. 3 residues coordinate L-glutamate: arginine 301, glutamate 307, and arginine 319. 3 residues coordinate ATP: arginine 319, arginine 324, and lysine 331. A Mg(2+)-binding site is contributed by glutamate 336. Arginine 338 is an L-glutamate binding site.

Belongs to the glutamine synthetase family. Oligomer of 12 subunits arranged in the form of two hexagons. Mg(2+) is required as a cofactor.

It localises to the cytoplasm. It carries out the reaction L-glutamate + NH4(+) + ATP = L-glutamine + ADP + phosphate + H(+). Functionally, probably involved in nitrogen metabolism via ammonium assimilation. Catalyzes the ATP-dependent biosynthesis of glutamine from glutamate and ammonia. The chain is Glutamine synthetase from Methanococcus voltae.